Consider the following 231-residue polypeptide: Ion-translocating oxidoreductase complex subunit E (231 aa).

Transmembrane regions (helical) follow at residues 18-38, 39-59, 63-83, 86-106, 125-145, and 182-202; these read ALVQ…ATNA, LGLG…ISTL, TPAE…VSAV, LINA…PLIV, ALSA…MFVL, and PFLL…MLAG.

Belongs to the NqrDE/RnfAE family. As to quaternary structure, the complex is composed of six subunits: RsxA, RsxB, RsxC, RsxD, RsxE and RsxG.

It localises to the cell inner membrane. Its function is as follows. Part of a membrane-bound complex that couples electron transfer with translocation of ions across the membrane. Required to maintain the reduced state of SoxR. The protein is Ion-translocating oxidoreductase complex subunit E of Escherichia coli O6:H1 (strain CFT073 / ATCC 700928 / UPEC).